The chain runs to 655 residues: Very long-chain specific acyl-CoA dehydrogenase, mitochondrial (655 aa).

The N-terminal 40 residues, 1–40 (MQSARMTPSVGRQLLRLGARSSRSAALQGQPRPTSAQRLY), are a transit peptide targeting the mitochondrion. Residues 1–70 (MQSARMTPSV…TREKPARAES (70 aa)) form a disordered region. Positions 21–37 (SSRSAALQGQPRPTSAQ) are enriched in polar residues. The catalytic stretch occupies residues 41 to 482 (ASEATQAVLE…ALQGCMDKGK (442 aa)). At K51 the chain carries N6-acetyllysine. Positions 60-70 (STREKPARAES) are enriched in basic and acidic residues. An N6-acetyllysine; alternate mark is found at K71 and K127. An N6-succinyllysine; alternate mark is found at K71 and K127. At K195 the chain carries N6-succinyllysine. An FAD-binding site is contributed by 214–223 (FCLTEPSSGS). C237 carries the post-translational modification S-nitrosocysteine. K239 is modified (N6-acetyllysine; alternate). K239 carries the N6-succinyllysine; alternate modification. 249 to 251 (WIS) lines the FAD pocket. At K268 the chain carries N6-succinyllysine. Residues K276 and K278 each carry the N6-acetyllysine; alternate modification. K276 and K278 each carry N6-succinyllysine; alternate. N6-acetyllysine is present on residues K298 and K316. K331 carries the N6-acetyllysine; alternate modification. K331 is subject to N6-succinyllysine; alternate. K372 bears the N6-succinyllysine mark. 461–463 (FEG) provides a ligand contact to substrate. E462 serves as the catalytic Proton acceptor. 464–466 (TND) contacts FAD. K482 carries the post-translational modification N6-acetyllysine; alternate. K482 is subject to N6-succinyllysine; alternate. The membrane-anchoring stretch occupies residues 483-516 (ELTGLGNALKNPLGNVGLLIGEASKQLRRRTGIG). Phosphoserine occurs at positions 517 and 522. K550 carries the N6-acetyllysine modification. The residue at position 556 (K556) is an N6-acetyllysine; alternate. K556 bears the N6-succinyllysine; alternate mark. Q562 is an FAD binding site. Residue K639 is modified to N6-succinyllysine.

It belongs to the acyl-CoA dehydrogenase family. As to quaternary structure, homodimer. Homodimerizes after import into the mitochondrion. FAD serves as cofactor. S-nitrosylation at Cys-237 in liver improves catalytic efficiency. In terms of tissue distribution, widely expressed (at protein level).

It localises to the mitochondrion inner membrane. It catalyses the reaction a very-long-chain 2,3-saturated fatty acyl-CoA + oxidized [electron-transfer flavoprotein] + H(+) = a very-long-chain (2E)-enoyl-CoA + reduced [electron-transfer flavoprotein]. The enzyme catalyses dodecanoyl-CoA + oxidized [electron-transfer flavoprotein] + H(+) = (2E)-dodecenoyl-CoA + reduced [electron-transfer flavoprotein]. The catalysed reaction is tetradecanoyl-CoA + oxidized [electron-transfer flavoprotein] + H(+) = (2E)-tetradecenoyl-CoA + reduced [electron-transfer flavoprotein]. It carries out the reaction oxidized [electron-transfer flavoprotein] + hexadecanoyl-CoA + H(+) = (2E)-hexadecenoyl-CoA + reduced [electron-transfer flavoprotein]. It catalyses the reaction octadecanoyl-CoA + oxidized [electron-transfer flavoprotein] + H(+) = (2E)-octadecenoyl-CoA + reduced [electron-transfer flavoprotein]. The enzyme catalyses eicosanoyl-CoA + oxidized [electron-transfer flavoprotein] + H(+) = (2E)-eicosenoyl-CoA + reduced [electron-transfer flavoprotein]. The catalysed reaction is docosanoyl-CoA + oxidized [electron-transfer flavoprotein] + H(+) = (2E)-docosenoyl-CoA + reduced [electron-transfer flavoprotein]. It carries out the reaction tetracosanoyl-CoA + oxidized [electron-transfer flavoprotein] + H(+) = (2E)-tetracosenoyl-CoA + reduced [electron-transfer flavoprotein]. The protein operates within lipid metabolism; mitochondrial fatty acid beta-oxidation. Functionally, very long-chain specific acyl-CoA dehydrogenase is one of the acyl-CoA dehydrogenases that catalyze the first step of mitochondrial fatty acid beta-oxidation, an aerobic process breaking down fatty acids into acetyl-CoA and allowing the production of energy from fats. The first step of fatty acid beta-oxidation consists in the removal of one hydrogen from C-2 and C-3 of the straight-chain fatty acyl-CoA thioester, resulting in the formation of trans-2-enoyl-CoA. Among the different mitochondrial acyl-CoA dehydrogenases, very long-chain specific acyl-CoA dehydrogenase acts specifically on acyl-CoAs with saturated 12 to 24 carbons long primary chains. This is Very long-chain specific acyl-CoA dehydrogenase, mitochondrial from Rattus norvegicus (Rat).